We begin with the raw amino-acid sequence, 425 residues long: 5-methylthioadenosine/S-adenosylhomocysteine deaminase (425 aa).

The Zn(2+) site is built by histidine 63 and histidine 65. Substrate-binding residues include glutamate 92 and histidine 184. Histidine 211 contacts Zn(2+). Residues glutamate 214 and aspartate 299 each contribute to the substrate site. Position 299 (aspartate 299) interacts with Zn(2+).

It belongs to the metallo-dependent hydrolases superfamily. MTA/SAH deaminase family. Zn(2+) is required as a cofactor.

It catalyses the reaction S-adenosyl-L-homocysteine + H2O + H(+) = S-inosyl-L-homocysteine + NH4(+). The catalysed reaction is S-methyl-5'-thioadenosine + H2O + H(+) = S-methyl-5'-thioinosine + NH4(+). Functionally, catalyzes the deamination of 5-methylthioadenosine and S-adenosyl-L-homocysteine into 5-methylthioinosine and S-inosyl-L-homocysteine, respectively. Is also able to deaminate adenosine. In Pyrococcus abyssi (strain GE5 / Orsay), this protein is 5-methylthioadenosine/S-adenosylhomocysteine deaminase.